A 233-amino-acid polypeptide reads, in one-letter code: uncharacterized protein (233 aa).

The protein belongs to the asfivirus H233R family.

This is an uncharacterized protein from African swine fever virus (isolate Tick/Malawi/Lil 20-1/1983) (ASFV).